The chain runs to 175 residues: Cell division protein SepF (175 aa).

Residues 20-29 (RYEDYDDYDD) are compositionally biased toward acidic residues. Residues 20 to 88 (RYEDYDDYDD…ERPTPPLRVT (69 aa)) are disordered. Composition is skewed to basic and acidic residues over residues 30–47 (AEPH…DLGS) and 54–73 (RRMD…RRVS).

The protein belongs to the SepF family. In terms of assembly, homodimer. Interacts with FtsZ.

The protein resides in the cytoplasm. Functionally, cell division protein that is part of the divisome complex and is recruited early to the Z-ring. Probably stimulates Z-ring formation, perhaps through the cross-linking of FtsZ protofilaments. Its function overlaps with FtsA. This chain is Cell division protein SepF, found in Acidothermus cellulolyticus (strain ATCC 43068 / DSM 8971 / 11B).